A 208-amino-acid chain; its full sequence is Inner membrane-spanning protein YciB (208 aa).

5 helical membrane passes run 49-69 (APVL…ILWL), 78-98 (TMLW…IYFH), 105-125 (WKPT…ELVF), 150-170 (FSWV…AFNF), and 178-198 (FKLF…AFFL).

This sequence belongs to the YciB family.

It is found in the cell inner membrane. Its function is as follows. Plays a role in cell envelope biogenesis, maintenance of cell envelope integrity and membrane homeostasis. The polypeptide is Inner membrane-spanning protein YciB (Polaromonas naphthalenivorans (strain CJ2)).